Reading from the N-terminus, the 147-residue chain is Hemoglobin subunit beta (147 aa).

An N-acetylvaline modification is found at valine 2. The Globin domain maps to 3 to 147 (HLSAEEKGHI…VATALAHKYH (145 aa)). An N6-acetyllysine modification is found at lysine 60. A heme b-binding site is contributed by histidine 64. Lysine 83 is modified (N6-acetyllysine). Position 93 (histidine 93) interacts with heme b. Cysteine 94 is modified (S-nitrosocysteine). Residue lysine 145 is modified to N6-acetyllysine.

It belongs to the globin family. In terms of assembly, heterotetramer of two alpha chains and two beta chains. Red blood cells.

In terms of biological role, involved in oxygen transport from the lung to the various peripheral tissues. The chain is Hemoglobin subunit beta (HBB) from Sminthopsis crassicaudata (Fat-tailed dunnart).